The sequence spans 163 residues: ATP synthase subunit b (163 aa).

The chain crosses the membrane as a helical span at residues 10–29 (ALYQLLAFSVLLFFLSKFAL).

It belongs to the ATPase B chain family. In terms of assembly, F-type ATPases have 2 components, F(1) - the catalytic core - and F(0) - the membrane proton channel. F(1) has five subunits: alpha(3), beta(3), gamma(1), delta(1), epsilon(1). F(0) has three main subunits: a(1), b(2) and c(10-14). The alpha and beta chains form an alternating ring which encloses part of the gamma chain. F(1) is attached to F(0) by a central stalk formed by the gamma and epsilon chains, while a peripheral stalk is formed by the delta and b chains.

The protein resides in the cell membrane. In terms of biological role, f(1)F(0) ATP synthase produces ATP from ADP in the presence of a proton or sodium gradient. F-type ATPases consist of two structural domains, F(1) containing the extramembraneous catalytic core and F(0) containing the membrane proton channel, linked together by a central stalk and a peripheral stalk. During catalysis, ATP synthesis in the catalytic domain of F(1) is coupled via a rotary mechanism of the central stalk subunits to proton translocation. Its function is as follows. Component of the F(0) channel, it forms part of the peripheral stalk, linking F(1) to F(0). This is ATP synthase subunit b from Alkalihalophilus pseudofirmus (strain ATCC BAA-2126 / JCM 17055 / OF4) (Bacillus pseudofirmus).